The chain runs to 182 residues: Large ribosomal subunit protein bL19m (182 aa).

Residues 1 to 21 (MFNAKHFFNLGLGFQWLQKRG) constitute a mitochondrion transit peptide.

Belongs to the bacterial ribosomal protein bL19 family. Component of the mitochondrial large ribosomal subunit (mt-LSU). Mature yeast 74S mitochondrial ribosomes consist of a small (37S) and a large (54S) subunit. The 37S small subunit contains a 15S ribosomal RNA (15S mt-rRNA) and at least 32 different proteins. The 54S large subunit contains a 21S rRNA (21S mt-rRNA) and at least 45 different proteins.

The protein localises to the mitochondrion. Functionally, component of the mitochondrial ribosome (mitoribosome), a dedicated translation machinery responsible for the synthesis of mitochondrial genome-encoded proteins, including at least some of the essential transmembrane subunits of the mitochondrial respiratory chain. The mitoribosomes are attached to the mitochondrial inner membrane and translation products are cotranslationally integrated into the membrane. bL19m is essential for respiration. This Schizosaccharomyces pombe (strain 972 / ATCC 24843) (Fission yeast) protein is Large ribosomal subunit protein bL19m (img1).